The following is a 416-amino-acid chain: MLQHPATDFYDLAAANAAAVLTARHTPPYSPTGLSGSVALHNNNNNNSSTSNNNNSTLDIMAHNGGGAGGGLHLNSSSNGGGGGGVVSGGGSGGRENLPSFGFTQEQVACVCEVLQQAGNIERLGRFLWSLPQCDKLQLNESVLKAKAVVAFHRGQYKELYRLLEHHHFSAQNHAKLQALWLKAHYVEAEKLRGRPLGAVGKYRVRRKFPLPRTIWDGEETSYCFKEKSRSVLRDWYSHNPYPSPREKRDLAEATGLTTTQVSNWFKNRRQRDRAAEHKDGSTDKQHLDSSSDSEMEGSMLPSQSAQHQQQQQQQQHSPGNSSGNNNGLHQQQLQHVAAEQGLQHHPHQPHPASNIANVAATKSSGGGGGGGVSAAAAAQMQMPPLTAAVAYSHLHSVMGAMPMTAMYDMGEYQHL.

2 disordered regions span residues 32 to 91 (TGLS…SGGG) and 262 to 329 (VSNW…NNGL). Residues 42–57 (NNNNNNSSTSNNNNST) show a composition bias toward low complexity. Residues 79 to 91 (NGGGGGGVVSGGG) are compositionally biased toward gly residues. Residues 218 to 277 (GEETSYCFKEKSRSVLRDWYSHNPYPSPREKRDLAEATGLTTTQVSNWFKNRRQRDRAAE) constitute a DNA-binding region (homeobox). Over residues 273–290 (DRAAEHKDGSTDKQHLDS) the composition is skewed to basic and acidic residues. Residues 291-329 (SSDSEMEGSMLPSQSAQHQQQQQQQQHSPGNSSGNNNGL) show a composition bias toward low complexity.

Belongs to the SIX/Sine oculis homeobox family. In developing embryos, expressed in the eye disk epithelium, bolwig's organ and the optic lobe primordium at areas of invagination. In adults, present in photoreceptor cells in the apical regions of the retina, and in optic lobes.

The protein resides in the nucleus. Its function is as follows. Required for visual system development. May transcriptionally regulate genes necessary for optic lobe invagination and Bolwig's nerve formation. In Drosophila melanogaster (Fruit fly), this protein is Protein sine oculis (so).